The primary structure comprises 116 residues: Large ribosomal subunit protein bL19 (116 aa).

Belongs to the bacterial ribosomal protein bL19 family.

Its function is as follows. This protein is located at the 30S-50S ribosomal subunit interface and may play a role in the structure and function of the aminoacyl-tRNA binding site. The sequence is that of Large ribosomal subunit protein bL19 (rplS) from Geobacillus stearothermophilus (Bacillus stearothermophilus).